The following is an 88-amino-acid chain: Apolipoprotein C-I (88 aa).

A signal peptide spans 1 to 26 (MRLFLSLPVLVVVLAMVWEGPAPTQA).

It belongs to the apolipoprotein C1 family.

It is found in the secreted. Inhibitor of lipoprotein binding to the low density lipoprotein (LDL) receptor, LDL receptor-related protein, and very low density lipoprotein (VLDL) receptor. Associates with high density lipoproteins (HDL) and the triacylglycerol-rich lipoproteins in the plasma and makes up about 10% of the protein of the VLDL and 2% of that of HDL. Appears to interfere directly with fatty acid uptake and is also the major plasma inhibitor of cholesteryl ester transfer protein (CETP). Binds free fatty acids and reduces their intracellular esterification. Modulates the interaction of APOE with beta-migrating VLDL and inhibits binding of beta-VLDL to the LDL receptor-related protein. This is Apolipoprotein C-I (APOC1) from Neomonachus schauinslandi (Hawaiian monk seal).